The following is a 530-amino-acid chain: 2,3-bisphosphoglycerate-independent phosphoglycerate mutase (530 aa).

Residues Asp-15 and Ser-65 each coordinate Mn(2+). Residue Ser-65 is the Phosphoserine intermediate of the active site. Substrate is bound by residues His-126, 155–156 (RD), Arg-187, Arg-193, 257–260 (RPDR), and Lys-330. 5 residues coordinate Mn(2+): Asp-397, His-401, Asp-438, His-439, and His-456.

The protein belongs to the BPG-independent phosphoglycerate mutase family. Monomer. Requires Mn(2+) as cofactor.

It catalyses the reaction (2R)-2-phosphoglycerate = (2R)-3-phosphoglycerate. It participates in carbohydrate degradation; glycolysis; pyruvate from D-glyceraldehyde 3-phosphate: step 3/5. Its function is as follows. Catalyzes the interconversion of 2-phosphoglycerate and 3-phosphoglycerate. The sequence is that of 2,3-bisphosphoglycerate-independent phosphoglycerate mutase from Synechococcus sp. (strain JA-3-3Ab) (Cyanobacteria bacterium Yellowstone A-Prime).